The sequence spans 119 residues: Ribonuclease (119 aa).

K6 and R9 together coordinate substrate. H11 (proton acceptor) is an active-site residue. 3 cysteine pairs are disulfide-bonded: C26–C81, C40–C92, and C58–C107. Residues 41 to 45 and R82 contribute to the substrate site; that span reads KFTNT. The active-site Proton donor is the H114.

The protein belongs to the pancreatic ribonuclease family. In terms of assembly, monomer. Interacts with and forms tight 1:1 complexes with RNH1. Dimerization of two such complexes may occur. Interaction with RNH1 inhibits this protein.

It is found in the secreted. It catalyses the reaction an [RNA] containing cytidine + H2O = an [RNA]-3'-cytidine-3'-phosphate + a 5'-hydroxy-ribonucleotide-3'-[RNA].. The catalysed reaction is an [RNA] containing uridine + H2O = an [RNA]-3'-uridine-3'-phosphate + a 5'-hydroxy-ribonucleotide-3'-[RNA].. Functionally, endonuclease that catalyzes the cleavage of RNA on the 3' side of pyrimidine nucleotides. Acts on single-stranded and double-stranded RNA. The chain is Ribonuclease from Chelonia mydas (Green sea-turtle).